A 253-amino-acid chain; its full sequence is Malonyl-[acyl-carrier protein] O-methyltransferase (253 aa).

It belongs to the methyltransferase superfamily.

The catalysed reaction is malonyl-[ACP] + S-adenosyl-L-methionine = malonyl-[ACP] methyl ester + S-adenosyl-L-homocysteine. It functions in the pathway cofactor biosynthesis; biotin biosynthesis. In terms of biological role, converts the free carboxyl group of a malonyl-thioester to its methyl ester by transfer of a methyl group from S-adenosyl-L-methionine (SAM). It allows to synthesize pimeloyl-ACP via the fatty acid synthetic pathway. The chain is Malonyl-[acyl-carrier protein] O-methyltransferase from Pectobacterium atrosepticum (strain SCRI 1043 / ATCC BAA-672) (Erwinia carotovora subsp. atroseptica).